We begin with the raw amino-acid sequence, 339 residues long: D-erythrose-4-phosphate dehydrogenase (339 aa).

11–12 contributes to the NAD(+) binding site; that stretch reads RI. Residues 153–155, R199, 212–213, and R235 contribute to the substrate site; these read SCT and TK. C154 serves as the catalytic Nucleophile. N317 provides a ligand contact to NAD(+).

It belongs to the glyceraldehyde-3-phosphate dehydrogenase family. Epd subfamily. As to quaternary structure, homotetramer.

It is found in the cytoplasm. It catalyses the reaction D-erythrose 4-phosphate + NAD(+) + H2O = 4-phospho-D-erythronate + NADH + 2 H(+). It functions in the pathway cofactor biosynthesis; pyridoxine 5'-phosphate biosynthesis; pyridoxine 5'-phosphate from D-erythrose 4-phosphate: step 1/5. Its function is as follows. Catalyzes the NAD-dependent conversion of D-erythrose 4-phosphate to 4-phosphoerythronate. This is D-erythrose-4-phosphate dehydrogenase from Shewanella halifaxensis (strain HAW-EB4).